An 88-amino-acid chain; its full sequence is Small ribosomal subunit protein uS17 (88 aa).

The protein belongs to the universal ribosomal protein uS17 family. Part of the 30S ribosomal subunit.

In terms of biological role, one of the primary rRNA binding proteins, it binds specifically to the 5'-end of 16S ribosomal RNA. The polypeptide is Small ribosomal subunit protein uS17 (Lactobacillus acidophilus (strain ATCC 700396 / NCK56 / N2 / NCFM)).